Consider the following 201-residue polypeptide: 3-isopropylmalate dehydratase small subunit (201 aa).

The protein belongs to the LeuD family. LeuD type 1 subfamily. As to quaternary structure, heterodimer of LeuC and LeuD.

The catalysed reaction is (2R,3S)-3-isopropylmalate = (2S)-2-isopropylmalate. Its pathway is amino-acid biosynthesis; L-leucine biosynthesis; L-leucine from 3-methyl-2-oxobutanoate: step 2/4. In terms of biological role, catalyzes the isomerization between 2-isopropylmalate and 3-isopropylmalate, via the formation of 2-isopropylmaleate. The chain is 3-isopropylmalate dehydratase small subunit from Nitrobacter winogradskyi (strain ATCC 25391 / DSM 10237 / CIP 104748 / NCIMB 11846 / Nb-255).